Reading from the N-terminus, the 196-residue chain is Large ribosomal subunit protein bL9 (196 aa).

Belongs to the bacterial ribosomal protein bL9 family.

Binds to the 23S rRNA. This chain is Large ribosomal subunit protein bL9, found in Gluconobacter oxydans (strain 621H) (Gluconobacter suboxydans).